A 113-amino-acid polypeptide reads, in one-letter code: Gas vesicle protein I2 (113 aa).

The disordered stretch occupies residues Met-1–Thr-93. The span at Gln-11 to Gln-22 shows a compositional bias: low complexity. Over residues Glu-52 to Ala-63 the composition is skewed to polar residues. Residues Ala-69 to Ala-81 are compositionally biased toward low complexity. Positions His-82–Thr-93 are enriched in polar residues.

Belongs to the gas vesicle GvpI family. In terms of assembly, gvpF to GvpM interact with each other in vitro, and may form multi-subunit complex(es). Interacts with GvpC and GvpO.

The protein resides in the gas vesicle. Its function is as follows. Proteins GvpF to GvpM might be involved in nucleating gas vesicle formation. A minor component of the gas vesicle. Gas vesicles are hollow, gas filled proteinaceous nanostructures found in several microbial planktonic microorganisms. They allow positioning of halobacteria at the optimal depth for growth in the poorly aerated, shallow brine pools of their habitat. Expression of 2 c-vac DNA fragments containing 2 divergently transcribed regions (gvpE-gvpF-gvpG-gvpH-gvpI-gvpJ-gvpK-gvpL-gvpM and gvpA-gvpC-gvpN-gvpO) allows H.volcanii to produce gas vesicles. In Halobacterium salinarum (strain ATCC 700922 / JCM 11081 / NRC-1) (Halobacterium halobium), this protein is Gas vesicle protein I2.